The chain runs to 73 residues: Sec-independent protein translocase protein TatA (73 aa).

The helical transmembrane segment at 1-21 threads the bilayer; that stretch reads MGSFSIGHWLIVLAIIVLLFG. Residues 43–73 are disordered; it reads MEDTTPEKSEKVEHKEESATSQKIEETTKNA.

The protein belongs to the TatA/E family. In terms of assembly, the Tat system comprises two distinct complexes: a TatABC complex, containing multiple copies of TatA, TatB and TatC subunits, and a separate TatA complex, containing only TatA subunits. Substrates initially bind to the TatABC complex, which probably triggers association of the separate TatA complex to form the active translocon.

It localises to the cell inner membrane. Functionally, part of the twin-arginine translocation (Tat) system that transports large folded proteins containing a characteristic twin-arginine motif in their signal peptide across membranes. TatA could form the protein-conducting channel of the Tat system. This Campylobacter concisus (strain 13826) protein is Sec-independent protein translocase protein TatA.